The sequence spans 1044 residues: Isoleucine--tRNA ligase (1044 aa).

The 'HIGH' region signature appears at 48 to 58; that stretch reads PFATGLPHFGH. The 'KMSKS' region motif lies at 594-598; that stretch reads KMSKS. K597 provides a ligand contact to ATP.

The protein belongs to the class-I aminoacyl-tRNA synthetase family. IleS type 2 subfamily. As to quaternary structure, monomer. The cofactor is Zn(2+).

The protein resides in the cytoplasm. It carries out the reaction tRNA(Ile) + L-isoleucine + ATP = L-isoleucyl-tRNA(Ile) + AMP + diphosphate. Its function is as follows. Catalyzes the attachment of isoleucine to tRNA(Ile). As IleRS can inadvertently accommodate and process structurally similar amino acids such as valine, to avoid such errors it has two additional distinct tRNA(Ile)-dependent editing activities. One activity is designated as 'pretransfer' editing and involves the hydrolysis of activated Val-AMP. The other activity is designated 'posttransfer' editing and involves deacylation of mischarged Val-tRNA(Ile). In Borrelia hermsii (strain HS1 / DAH), this protein is Isoleucine--tRNA ligase.